The chain runs to 491 residues: Acetyl-coenzyme A carboxylase carboxyl transferase subunit beta, chloroplastic (491 aa).

Residues 28-56 form a disordered region; the sequence is LGPIENTSESEDPNRNDMKKNSHSWGSRD. The CoA carboxyltransferase N-terminal domain occupies 223 to 491; that stretch reads LWVQCENCYG…FPLNKNSIEH (269 aa). Residues Cys227, Cys230, Cys246, and Cys249 each coordinate Zn(2+). The C4-type zinc finger occupies 227–249; the sequence is CENCYGLNYKKILKSKMNLCEQC.

Belongs to the AccD/PCCB family. In terms of assembly, acetyl-CoA carboxylase is a heterohexamer composed of biotin carboxyl carrier protein, biotin carboxylase and 2 subunits each of ACCase subunit alpha and ACCase plastid-coded subunit beta (accD). The cofactor is Zn(2+).

The protein resides in the plastid. The protein localises to the chloroplast stroma. It carries out the reaction N(6)-carboxybiotinyl-L-lysyl-[protein] + acetyl-CoA = N(6)-biotinyl-L-lysyl-[protein] + malonyl-CoA. The protein operates within lipid metabolism; malonyl-CoA biosynthesis; malonyl-CoA from acetyl-CoA: step 1/1. In terms of biological role, component of the acetyl coenzyme A carboxylase (ACC) complex. Biotin carboxylase (BC) catalyzes the carboxylation of biotin on its carrier protein (BCCP) and then the CO(2) group is transferred by the transcarboxylase to acetyl-CoA to form malonyl-CoA. The chain is Acetyl-coenzyme A carboxylase carboxyl transferase subunit beta, chloroplastic from Daucus carota (Wild carrot).